Reading from the N-terminus, the 583-residue chain is Complement factor I (583 aa).

An N-terminal signal peptide occupies residues 1–18 (MKLLHVFLLFLCFHLRFC). 17 disulfide bridges follow: Cys33/Cys255, Cys43/Cys54, Cys48/Cys59, Cys61/Cys93, Cys67/Cys86, Cys75/Cys106, Cys141/Cys181, Cys154/Cys214, Cys186/Cys196, Cys229/Cys247, Cys241/Cys256, Cys259/Cys271, Cys266/Cys284, Cys278/Cys293, Cys327/Cys453, Cys365/Cys381, and Cys373/Cys444. In terms of domain architecture, Kazal-like spans 55–108 (IEGTCVCKLPYQCPKNGTAVCATNRRSFPTYCQQKSLECLHPGTKFLNNGTCTA). Asn70 carries an N-linked (GlcNAc...) asparagine glycan. Asn103 is a glycosylation site (N-linked (GlcNAc...) (complex) asparagine). The region spanning 114–212 (VSLKHGNTDS…TMGYQDFADV (99 aa)) is the SRCR domain. The N-linked (GlcNAc...) asparagine glycan is linked to Asn177. 2 LDL-receptor class A domains span residues 213 to 257 (VCYT…LCCK) and 258 to 294 (ACQGKGFHCKSGVCIPSQYQCNGEVDCITGEDEVGCA). Ca(2+)-binding residues include Lys239, Asp242, Ile244, Asp246, Asp252, and Glu253. Residues Tyr276, Asn279, Glu281, Asp283, Asp289, and Glu290 each coordinate Ca(2+). A Peptidase S1 domain is found at 340-574 (IVGGKRAQLG…YFDWISYHVG (235 aa)). Catalysis depends on charge relay system residues His380 and Asp429. N-linked (GlcNAc...) asparagine glycans are attached at residues Asn464 and Asn494. 3 cysteine pairs are disulfide-bonded: Cys467-Cys531, Cys495-Cys510, and Cys521-Cys550. The active-site Charge relay system is the Ser525. Asn536 carries an N-linked (GlcNAc...) asparagine glycan.

Belongs to the peptidase S1 family. In terms of assembly, heterodimer of a light and heavy chains; disulfide-linked. The fully processed and mature protein circulates as a zymogen, and is allosterically activated by substrate-induced remodeling of the active site. Interacts with C3b. Interacts with complement factor H. (Microbial infection) Interacts with Staphylococcus aureus clumping factor A/ClfA; this interaction enhances cleavage of C3b into iC3b by CFI. Expressed in the liver by hepatocytes. Also present in other cells such as monocytes, fibroblasts or keratinocytes.

The protein localises to the secreted. It localises to the extracellular space. The enzyme catalyses Inactivates complement subcomponents C3b, iC3b and C4b by proteolytic cleavage.. Functionally, trypsin-like serine protease that plays an essential role in regulating the immune response by controlling all complement pathways. Inhibits these pathways by cleaving three peptide bonds in the alpha-chain of C3b and two bonds in the alpha-chain of C4b thereby inactivating these proteins. Essential cofactors for these reactions include factor H and C4BP in the fluid phase and membrane cofactor protein/CD46 and CR1 on cell surfaces. The presence of these cofactors on healthy cells allows degradation of deposited C3b by CFI in order to prevent undesired complement activation, while in apoptotic cells or microbes, the absence of such cofactors leads to C3b-mediated complement activation and subsequent opsonization. The sequence is that of Complement factor I (CFI) from Homo sapiens (Human).